Here is a 631-residue protein sequence, read N- to C-terminus: MTPALTALLCLGLSLGPRTRVQAGPFPKPTLWAEPGSVISWGSPVTIWCQGSQEAQEYRLHKEGSPEPLDRNNPLEPKNKARFSIPSMTEHHAGRYRCHYYSSAGWSEPSDPLEMVMTGAYSKPTLSALPSPVVASGGNMTLRCGSQKGYHHFVLMKEGEHQLPRTLDSQQLHSRGFQALFPVGPVTPSHRWRFTCYYYYTNTPWVWSHPSDPLEILPSGVSRKPSLLTLQGPVLAPGQSLTLQCGSDVGYNRFVLYKEGERDFLQRPGQQPQAGLSQANFTLGPVSPSNGGQYRCYGAHNLSSEWSAPSDPLNILMAGQIYDTVSLSAQPGPTVASGENVTLLCQSWWQFDTFLLTKEGAAHPPLRLRSMYGAHKYQAEFPMSPVTSAHAGTYRCYGSYSSNPHLLSHPSEPLELVVSGHSGGSSLPPTGPPSTPGLGRYLEVLIGVSVAFVLLLFLLLFLLLRRQRHSKHRTSDQRKTDFQRPAGAAETEPKDRGLLRRSSPAADVQEENLYAAVKDTQSEDRVELDSQSPHDEDPQAVTYAPVKHSSPRREMASPPSSLSGEFLDTKDRQVEEDRQMDTEAAASEASQDVTYAQLHSLTLRRKATEPPPSQEGEPPAEPSIYATLAIH.

The signal sequence occupies residues 1-23; that stretch reads MTPALTALLCLGLSLGPRTRVQA. At 24–443 the chain is on the extracellular side; that stretch reads GPFPKPTLWA…STPGLGRYLE (420 aa). Ig-like C2-type domains lie at 42 to 100, 111 to 229, 225 to 314, and 338 to 419; these read GSPV…RCHY, DPLE…SLLT, PSLL…DPLN, and GENV…LVVS. Cys49 and Cys98 are oxidised to a cystine. Positions 59–70 are enriched in basic and acidic residues; sequence RLHKEGSPEPLD. The segment at 59 to 78 is disordered; the sequence is RLHKEGSPEPLDRNNPLEPK. A glycan (N-linked (GlcNAc...) asparagine) is linked at Asn139. 2 disulfides stabilise this stretch: Cys144-Cys196 and Cys245-Cys296. N-linked (GlcNAc...) asparagine glycosylation is found at Asn280, Asn301, and Asn340. A disulfide bond links Cys345 and Cys396. The helical transmembrane segment at 444–464 threads the bilayer; sequence VLIGVSVAFVLLLFLLLFLLL. At 465–631 the chain is on the cytoplasmic side; sequence RRQRHSKHRT…PSIYATLAIH (167 aa). The interval 470 to 631 is disordered; that stretch reads SKHRTSDQRK…PSIYATLAIH (162 aa). Residues 473–482 show a composition bias toward basic and acidic residues; that stretch reads RTSDQRKTDF. Residues 512–517 carry the ITIM motif 1 motif; the sequence is NLYAAV. Basic and acidic residues-rich tracts occupy residues 520–537 and 567–581; these read TQSE…HDED and LDTK…RQMD. The span at 588–600 shows a compositional bias: polar residues; sequence EASQDVTYAQLHS. 2 short sequence motifs (ITIM motif) span residues 593–598 and 623–628; these read VTYAQL and SIYATL. Residues Tyr595 and Tyr625 each carry the phosphotyrosine; by LYN modification.

As to quaternary structure, interacts with LYN, PTPN6/SHP-1 and PTPN11/SHP-2. Post-translationally, phosphorylated on tyrosine residues by LYN. Phosphorylation at Tyr-595 and Tyr-625 is important for interaction with PTPN6/SHP-1 and PTPN11/SHP-2. As to expression, detected in monocytes and B-cells.

The protein localises to the cell membrane. Functionally, may act as receptor for class I MHC antigens. Becomes activated upon coligation of LILRB3 and immune receptors, such as FCGR2B and the B-cell receptor. Down-regulates antigen-induced B-cell activation by recruiting phosphatases to its immunoreceptor tyrosine-based inhibitor motifs (ITIM). The protein is Leukocyte immunoglobulin-like receptor subfamily B member 3 (LILRB3) of Homo sapiens (Human).